A 241-amino-acid polypeptide reads, in one-letter code: Leucyl/phenylalanyl-tRNA--protein transferase (241 aa).

It belongs to the L/F-transferase family.

The protein localises to the cytoplasm. The enzyme catalyses N-terminal L-lysyl-[protein] + L-leucyl-tRNA(Leu) = N-terminal L-leucyl-L-lysyl-[protein] + tRNA(Leu) + H(+). The catalysed reaction is N-terminal L-arginyl-[protein] + L-leucyl-tRNA(Leu) = N-terminal L-leucyl-L-arginyl-[protein] + tRNA(Leu) + H(+). It carries out the reaction L-phenylalanyl-tRNA(Phe) + an N-terminal L-alpha-aminoacyl-[protein] = an N-terminal L-phenylalanyl-L-alpha-aminoacyl-[protein] + tRNA(Phe). In terms of biological role, functions in the N-end rule pathway of protein degradation where it conjugates Leu, Phe and, less efficiently, Met from aminoacyl-tRNAs to the N-termini of proteins containing an N-terminal arginine or lysine. The chain is Leucyl/phenylalanyl-tRNA--protein transferase from Neisseria meningitidis serogroup C / serotype 2a (strain ATCC 700532 / DSM 15464 / FAM18).